The following is a 612-amino-acid chain: Probable cytosolic Fe-S cluster assembly factor SJAG_02895 (612 aa).

13–20 (GKGGVGKS) contacts ATP. [4Fe-4S] cluster-binding residues include Cys200 and Cys203. 7 WD repeats span residues 287-326 (GHRGRIWSVAVHPTLPLVATASEDKSVRVFQAQTGELIHV), 330-370 (YHTR…WECV), 375-414 (GHENEVKCVAWSHDGVYLATCSRDKSVWIWEAMEDDEFDC), 420-459 (EHTQDVKVVAWHPKDDLLVSGSYDNTIRFWRDDGDDWVQT), 464-503 (SHTSTVWALNFSPDGRLLASGDGEGEVFIWEKLVSNEDAA), 528-566 (TFTEPVYTLGWKDDHTLCASGAEGTIGLFAYEDDVSTWH), and 574-612 (AHDVYEINTIAWTNDSRLLSGGDDGLCNVWKLSEADQTA).

In the N-terminal section; belongs to the Mrp/NBP35 ATP-binding proteins family. NUBP2/CFD1 subfamily. This sequence in the C-terminal section; belongs to the WD repeat CIA1 family. As to quaternary structure, heterotetramer of 2 nbp35 and 2 SJAG_02895 chains. The cofactor is [4Fe-4S] cluster.

Its subcellular location is the cytoplasm. The protein resides in the nucleus. Functionally, fusion protein of two essential components of the cytosolic iron-sulfur (Fe/S) protein assembly (CIA) machinery. Required for maturation of extramitochondrial Fe-S proteins. May form a heterotetramer with nubp35, functioning as a Fe-S scaffold complex, mediating the de novo assembly of an Fe-S cluster and its transfer to target apoproteins. The sequence is that of Probable cytosolic Fe-S cluster assembly factor SJAG_02895 from Schizosaccharomyces japonicus (strain yFS275 / FY16936) (Fission yeast).